A 145-amino-acid polypeptide reads, in one-letter code: Arginine repressor (145 aa).

Belongs to the ArgR family.

It is found in the cytoplasm. It participates in amino-acid biosynthesis; L-arginine biosynthesis [regulation]. Its function is as follows. Regulates arginine biosynthesis genes. The chain is Arginine repressor from Streptococcus mutans serotype c (strain ATCC 700610 / UA159).